A 344-amino-acid chain; its full sequence is UDP-N-acetylglucosamine transporter UGNT1 (344 aa).

The disordered stretch occupies residues 1 to 23; that stretch reads MRNNPVLPVSDPPLAGENDSDGK. 9 helical membrane-spanning segments follow: residues 41 to 61, 66 to 86, 92 to 112, 114 to 134, 167 to 187, 194 to 214, 226 to 246, 264 to 284, and 304 to 324; these read YAAL…KAAL, FPCV…FLYA, IISF…FVPV, TLFH…ASMA, YTRS…FAGA, FYGY…LATI, FGLM…WTFI, FMVV…CIFL, and FTVG…MNVI.

This sequence belongs to the TPT transporter family. UGnT (TC 2.A.7.15) subfamily. As to expression, expressed in roots, leaves, stems, flowers and siliques.

Its subcellular location is the golgi apparatus membrane. Its function is as follows. Mediates the transport of UDP-N-acetylglucosamine (UDP-GlcNAc) across the Golgi apparatus membrane. Delivers an essential substrate for the maturation of N-glycans and the GlcNAc-containing glycosyl inositol phosphorylceramide (GIPC) class of sphingolipids in the Golgi apparatus. This chain is UDP-N-acetylglucosamine transporter UGNT1, found in Arabidopsis thaliana (Mouse-ear cress).